The chain runs to 451 residues: Glycine--tRNA ligase (451 aa).

Substrate is bound by residues arginine 99 and glutamate 168. ATP is bound by residues 200–202 (RNE), 210–215 (FRTREF), 284–285 (EL), and 328–331 (GLDR). Position 215-219 (215-219 (FEQME)) interacts with substrate. Residue 324–328 (EPSVG) participates in substrate binding.

It belongs to the class-II aminoacyl-tRNA synthetase family. In terms of assembly, homodimer.

It localises to the cytoplasm. It catalyses the reaction tRNA(Gly) + glycine + ATP = glycyl-tRNA(Gly) + AMP + diphosphate. In terms of biological role, catalyzes the attachment of glycine to tRNA(Gly). This is Glycine--tRNA ligase from Mycoplasmopsis synoviae (strain 53) (Mycoplasma synoviae).